The sequence spans 120 residues: Fumarate reductase subunit D (120 aa).

3 consecutive transmembrane segments (helical) span residues Phe-25–Ile-45, Val-55–Pro-75, and Ile-100–Ile-120.

Belongs to the FrdD family. In terms of assembly, part of an enzyme complex containing four subunits: a flavoprotein (FrdA), an iron-sulfur protein (FrdB), and two hydrophobic anchor proteins (FrdC and FrdD).

The protein resides in the cell inner membrane. Its function is as follows. Anchors the catalytic components of the fumarate reductase complex to the cell membrane, binds quinones. The protein is Fumarate reductase subunit D of Aliivibrio salmonicida (strain LFI1238) (Vibrio salmonicida (strain LFI1238)).